The following is a 96-amino-acid chain: Large ribosomal subunit protein uL23 (96 aa).

This sequence belongs to the universal ribosomal protein uL23 family. In terms of assembly, part of the 50S ribosomal subunit. Contacts protein L29, and trigger factor when it is bound to the ribosome.

Functionally, one of the early assembly proteins it binds 23S rRNA. One of the proteins that surrounds the polypeptide exit tunnel on the outside of the ribosome. Forms the main docking site for trigger factor binding to the ribosome. This is Large ribosomal subunit protein uL23 from Vesicomyosocius okutanii subsp. Calyptogena okutanii (strain HA).